Reading from the N-terminus, the 192-residue chain is Putative acetyltransferase YjbC (192 aa).

The N-acetyltransferase domain maps to 1 to 139; it reads MNWYEKLSEY…MEILYWSPKT (139 aa).

Its subcellular location is the cytoplasm. The chain is Putative acetyltransferase YjbC (yjbC) from Bacillus subtilis (strain 168).